The primary structure comprises 502 residues: Probable glycine dehydrogenase (decarboxylating) subunit 2 (502 aa).

Lysine 273 carries the N6-(pyridoxal phosphate)lysine modification.

It belongs to the GcvP family. C-terminal subunit subfamily. In terms of assembly, the glycine cleavage system is composed of four proteins: P, T, L and H. In this organism, the P 'protein' is a heterodimer of two subunits. Pyridoxal 5'-phosphate is required as a cofactor.

The catalysed reaction is N(6)-[(R)-lipoyl]-L-lysyl-[glycine-cleavage complex H protein] + glycine + H(+) = N(6)-[(R)-S(8)-aminomethyldihydrolipoyl]-L-lysyl-[glycine-cleavage complex H protein] + CO2. In terms of biological role, the glycine cleavage system catalyzes the degradation of glycine. The P protein binds the alpha-amino group of glycine through its pyridoxal phosphate cofactor; CO(2) is released and the remaining methylamine moiety is then transferred to the lipoamide cofactor of the H protein. In Pyrococcus abyssi (strain GE5 / Orsay), this protein is Probable glycine dehydrogenase (decarboxylating) subunit 2.